We begin with the raw amino-acid sequence, 542 residues long: Phosphoglucomutase (542 aa).

Substrate-binding positions include Thr-17, Arg-21, 112-113, and Lys-125; that span reads SH. Residue Ser-112 is the Phosphoserine intermediate of the active site. Ser-112 serves as a coordination point for Mg(2+). Residues Asp-276, Asp-278, and Asp-280 each contribute to the Mg(2+) site. Residues 280–281, Thr-343, 362–364, Lys-375, and Arg-495 each bind substrate; these read DR and EES.

The protein belongs to the phosphohexose mutase family. Mg(2+) serves as cofactor.

The catalysed reaction is alpha-D-glucose 1-phosphate = alpha-D-glucose 6-phosphate. Its function is as follows. This enzyme participates in both the breakdown and synthesis of glucose. Required for the synthesis of capsular polysaccharide and normal lipopolysaccharide. The chain is Phosphoglucomutase (pgm) from Rhizobium radiobacter (Agrobacterium tumefaciens).